We begin with the raw amino-acid sequence, 423 residues long: Serine--tRNA ligase (423 aa).

229-231 contributes to the L-serine binding site; it reads TAE. An ATP-binding site is contributed by 260 to 262; it reads RKE. Glu283 lines the L-serine pocket. 347–350 is an ATP binding site; the sequence is EVSS. L-serine is bound at residue Ser383.

This sequence belongs to the class-II aminoacyl-tRNA synthetase family. Type-1 seryl-tRNA synthetase subfamily. In terms of assembly, homodimer. The tRNA molecule binds across the dimer.

It is found in the cytoplasm. The catalysed reaction is tRNA(Ser) + L-serine + ATP = L-seryl-tRNA(Ser) + AMP + diphosphate + H(+). The enzyme catalyses tRNA(Sec) + L-serine + ATP = L-seryl-tRNA(Sec) + AMP + diphosphate + H(+). The protein operates within aminoacyl-tRNA biosynthesis; selenocysteinyl-tRNA(Sec) biosynthesis; L-seryl-tRNA(Sec) from L-serine and tRNA(Sec): step 1/1. Catalyzes the attachment of serine to tRNA(Ser). Is also able to aminoacylate tRNA(Sec) with serine, to form the misacylated tRNA L-seryl-tRNA(Sec), which will be further converted into selenocysteinyl-tRNA(Sec). The chain is Serine--tRNA ligase from Chloroflexus aurantiacus (strain ATCC 29366 / DSM 635 / J-10-fl).